Consider the following 338-residue polypeptide: Alcohol dehydrogenase (338 aa).

Zn(2+)-binding residues include C38, H61, E62, C92, C95, C98, C106, and C148.

Belongs to the zinc-containing alcohol dehydrogenase family. As to quaternary structure, homotetramer. Zn(2+) serves as cofactor.

The enzyme catalyses a primary alcohol + NAD(+) = an aldehyde + NADH + H(+). It carries out the reaction a secondary alcohol + NAD(+) = a ketone + NADH + H(+). The catalysed reaction is ethanol + NAD(+) = acetaldehyde + NADH + H(+). It catalyses the reaction 1-propanol + NAD(+) = propanal + NADH + H(+). The enzyme catalyses butan-1-ol + NAD(+) = butanal + NADH + H(+). It carries out the reaction propan-2-ol + NAD(+) = acetone + NADH + H(+). In terms of biological role, psychrophilic alcohol dehydrogenase that exhibits a wide range of substrate specificity, oxidizing mainly primary and secondary aliphatic alcohols, utilizing NAD(+) as a cosubstrate. In vitro, shows highest reaction rates for ethanol as a substrate and gradually decreases its reaction rates as the length and branching of the carbon chain of the alcohol substrates increase. To a lesser extent, is also able to reduce aldehydes and ketones. Do not catalyze the further oxidation of aldehydes to carboxylic acids. Cannot use NADP(+) instead of NAD(+). In Moraxella sp. (strain TAE123), this protein is Alcohol dehydrogenase.